The primary structure comprises 672 residues: Poly-beta-1,6-N-acetyl-D-glucosamine N-deacetylase (672 aa).

An N-terminal signal peptide occupies residues 1–20 (MLRNGNKYLLMLVSIIMLTA). C21 is lipidated: N-palmitoyl cysteine. C21 is lipidated: S-diacylglycerol cysteine. Residues 107 to 349 (KAVVLTFDDG…IQRVKDMQIS (243 aa)) form the NodB homology domain.

It belongs to the polysaccharide deacetylase family.

Its subcellular location is the cell outer membrane. In terms of biological role, catalyzes the N-deacetylation of poly-beta-1,6-N-acetyl-D-glucosamine (PGA), a biofilm adhesin polysaccharide. N-deacetylation promotes PGA export through the PgaA porin. The chain is Poly-beta-1,6-N-acetyl-D-glucosamine N-deacetylase (pgaB) from Escherichia coli (strain K12).